The following is an 897-amino-acid chain: Patched domain-containing protein 1 (897 aa).

A helical membrane pass occupies residues 25 to 45 (PVFFLTVPAVLTIIFGSTVLS). N-linked (GlcNAc...) asparagine glycans are attached at residues Asn-132, Asn-167, and Asn-179. Helical transmembrane passes span 271–291 (GVLAKSEVLVSLVLVLLAATI) and 306–326 (GLLGVLTICIANVTAAGIFFI). The SSD domain occupies 273–433 (LAKSEVLVSL…FSFYGSCLVF (161 aa)). Asn-332 is a glycosylation site (N-linked (GlcNAc...) asparagine). The next 4 membrane-spanning stretches (helical) occupy residues 335-355 (LLGIPFFAMGHGTKGVFELLA), 377-397 (VMVCYTMTSSLYIITFGMGAS), 414-434 (VAVLVNYFYVFSFYGSCLVFA), and 506-526 (PFVVILYLIYASFSFMGCLQI). N-linked (GlcNAc...) asparagine glycans are attached at residues Asn-572 and Asn-603. A run of 3 helical transmembrane segments spans residues 701–721 (PILTSGFSVLTILILTFFLVI), 727–747 (FWLILTVTSVELGVLGLMTLW), and 754–774 (ISILCLIYTLNFAMDHCAPHL). N-linked (GlcNAc...) asparagine glycosylation occurs at Asn-803. 2 helical membrane passes run 806 to 826 (CFVIGIMPLLFVPSNLTYTLF) and 831 to 851 (LTAGCTVLHCFVILPVFLTFF). Over residues 856–866 (KRHKKKKRAKR) the composition is skewed to basic residues. A disordered region spans residues 856–881 (KRHKKKKRAKRKEREREREREREREE). Residues 867–881 (KEREREREREREREE) show a composition bias toward basic and acidic residues.

Belongs to the patched family.

Its subcellular location is the cell membrane. It localises to the cell projection. It is found in the dendritic spine. In terms of biological role, can bind cholesterol in vitro. The chain is Patched domain-containing protein 1 (ptchd1) from Danio rerio (Zebrafish).